The following is a 302-amino-acid chain: Zinc import ATP-binding protein ZnuC (302 aa).

The region spanning 13–228 is the ABC transporter domain; it reads VSLANAGVRR…PEYLKLFGRR (216 aa). Residue 45–52 participates in ATP binding; it reads GPNGSGKS.

The protein belongs to the ABC transporter superfamily. Zinc importer (TC 3.A.1.15.5) family. In terms of assembly, the complex is composed of two ATP-binding proteins (ZnuC), two transmembrane proteins (ZnuB) and a solute-binding protein (ZnuA).

Its subcellular location is the cell inner membrane. It catalyses the reaction Zn(2+)(out) + ATP(in) + H2O(in) = Zn(2+)(in) + ADP(in) + phosphate(in) + H(+)(in). Functionally, part of the ABC transporter complex ZnuABC involved in zinc import. Responsible for energy coupling to the transport system. This is Zinc import ATP-binding protein ZnuC from Rhizobium meliloti (strain 1021) (Ensifer meliloti).